The sequence spans 261 residues: Succinate dehydrogenase iron-sulfur subunit (261 aa).

One can recognise a 2Fe-2S ferredoxin-type domain in the interval 28–119; it reads RKVQVYRYDP…DIKIYPLPHM (92 aa). Residues Cys80, Cys85, and Cys100 each coordinate [2Fe-2S] cluster. The 31-residue stretch at 161–191 folds into the 4Fe-4S ferredoxin-type domain; the sequence is DREKLDGLYECILCACCSTSCPSYWWNSDKY. [4Fe-4S] cluster is bound by residues Cys171, Cys174, and Cys177. Cys181 provides a ligand contact to [3Fe-4S] cluster. Trp186 lines the a ubiquinone pocket. 2 residues coordinate [3Fe-4S] cluster: Cys228 and Cys234. Cys238 provides a ligand contact to [4Fe-4S] cluster.

Belongs to the succinate dehydrogenase/fumarate reductase iron-sulfur protein family. As to quaternary structure, part of an enzyme complex containing four subunits: a flavoprotein, an iron-sulfur, cytochrome b-556, and a hydrophobic anchor protein. The cofactor is [2Fe-2S] cluster. Requires [3Fe-4S] cluster as cofactor. [4Fe-4S] cluster is required as a cofactor.

The enzyme catalyses a quinone + succinate = fumarate + a quinol. It functions in the pathway carbohydrate metabolism; tricarboxylic acid cycle; fumarate from succinate (bacterial route): step 1/1. This is Succinate dehydrogenase iron-sulfur subunit (sdhB) from Rickettsia typhi (strain ATCC VR-144 / Wilmington).